Reading from the N-terminus, the 1178-residue chain is MLEGCILPDFGQSKTDVSPSQSRPQSSPNNSVPGAPNRISFAKLREPLEVPGLLDVQTDSFEWLIGSPCWRAAAASRGDLKPVGGLEEVLYELSPIEDFSGSMSLSFSDPRFDEVKAPVEECKDKDMTYAAPLFVTAEFINNNTGEIKSQTVFMGDFPMMTEKGTFIINGTERVVVSQLVRSPGVYFDETIDKSTEKTLHSVKVIPSRGAWLEFDVDKRDTVGVRIDRKRRQPVTVLLKALGWTSEQITERFGFSEIMRSTLEKDNTVGTDEALLDIYRKLRPGEPPTKESAQTLLENLFFKEKRYDLARVGRYKVNKKLGLHAGELITSSTLTEEDVVATIEYLVRLHEGQSTMTVPGGVEVPVETDDIDHFGNRRLRTVGELIQNQIRVGMSRMERVVRERMTTQDVEAITPQTLINIRPVVAAIKEFFGTSQLSQFMDQNNPLSGLTHKRRLSALGPGGLSRERAGLEVRDVHPSHYGRMCPIETPEGPNIGLIGSLSVYARVNPFGFIETPYRKVVDGVVSDEIEYLTADEEDRHVVAQANSPIDEAGRFLEPRVLVRRKAGEVEYVASSEVDYMDVSPRQMVSVATAMIPFLEHDDANRALMGANMQRQAVPLVRSEAPLVGTGMELRAAIDAGHVVVAEKSGVIEEVSADYITVMADDGTRRTYRMRKFARSNHGTCANQSPIVDAGDRVEAGQVIADGPCTENGEMALGKNLLVAIMPWEGHNYEDAIILSNRLVEEDVLTSIHIEEHEIDARDTKLGAEEITRDIPNVSDEVLADLDERGIVRIGAEVRDGDILVGKVTPKGETELTPEERLLRAIFGEKAREVRDTSLKVPHGESGKVIGIRVFSHEDDDELPAGVNELVRVYVAQKRKISDGDKLAGRHGNKGVIGKILPAEDMPFLPDGTPVDIILNTHGVPRRMNVGQILETHLGWVAKSGWKIDVAGGIPDWAVNLPEELLHAAPNQIVSTPVFDGAKEEELQGLLSSTLPNRDGDVMVGGDGKAVLFDGRSGEPFPYPVTVGYMYIMKLHHLVDDKIHARSTGPYSMITQQPLGGKAQFGGQRFGEMECWAMQAYGAAYTLQELLTIKSDDTVGRVKVYEAIVKGENIPEPGIPESFKVLLKELQSLCLNVEVLSSDGAAIELREGEDEDLERAAANLGINLSRNESASIEDLA.

Residues 1 to 37 (MLEGCILPDFGQSKTDVSPSQSRPQSSPNNSVPGAPN) are disordered. Residues 17 to 33 (VSPSQSRPQSSPNNSVP) are compositionally biased toward low complexity.

It belongs to the RNA polymerase beta chain family. As to quaternary structure, the RNAP catalytic core consists of 2 alpha, 1 beta, 1 beta' and 1 omega subunit. When a sigma factor is associated with the core the holoenzyme is formed, which can initiate transcription.

The catalysed reaction is RNA(n) + a ribonucleoside 5'-triphosphate = RNA(n+1) + diphosphate. Its function is as follows. DNA-dependent RNA polymerase catalyzes the transcription of DNA into RNA using the four ribonucleoside triphosphates as substrates. The polypeptide is DNA-directed RNA polymerase subunit beta (Mycobacterium leprae (strain Br4923)).